We begin with the raw amino-acid sequence, 348 residues long: Dihydroorotase (348 aa).

Residues H17 and H19 each contribute to the Zn(2+) site. Substrate contacts are provided by residues 19–21 and N45; that span reads HLR. Zn(2+)-binding residues include K103, H140, and H178. N6-carboxylysine is present on K103. H140 lines the substrate pocket. L223 contacts substrate. A Zn(2+)-binding site is contributed by D251. D251 is an active-site residue. Substrate contacts are provided by H255 and A267.

This sequence belongs to the metallo-dependent hydrolases superfamily. DHOase family. Class II DHOase subfamily. In terms of assembly, homodimer. Zn(2+) is required as a cofactor.

It carries out the reaction (S)-dihydroorotate + H2O = N-carbamoyl-L-aspartate + H(+). It participates in pyrimidine metabolism; UMP biosynthesis via de novo pathway; (S)-dihydroorotate from bicarbonate: step 3/3. In terms of biological role, catalyzes the reversible cyclization of carbamoyl aspartate to dihydroorotate. The sequence is that of Dihydroorotase from Serratia proteamaculans (strain 568).